The following is a 175-amino-acid chain: Large ribosomal subunit protein uL10 (175 aa).

This sequence belongs to the universal ribosomal protein uL10 family. In terms of assembly, part of the ribosomal stalk of the 50S ribosomal subunit. The N-terminus interacts with L11 and the large rRNA to form the base of the stalk. The C-terminus forms an elongated spine to which L12 dimers bind in a sequential fashion forming a multimeric L10(L12)X complex.

Forms part of the ribosomal stalk, playing a central role in the interaction of the ribosome with GTP-bound translation factors. This chain is Large ribosomal subunit protein uL10, found in Psychrobacter cryohalolentis (strain ATCC BAA-1226 / DSM 17306 / VKM B-2378 / K5).